Consider the following 449-residue polypeptide: Signal recognition particle protein (449 aa).

Residues 109–116 (GLQGSGKT), 191–195 (DTAGR), and 249–252 (SRID) each bind GTP.

This sequence belongs to the GTP-binding SRP family. SRP54 subfamily. As to quaternary structure, part of the signal recognition particle protein translocation system, which is composed of SRP and FtsY. SRP is a ribonucleoprotein composed of Ffh and a 4.5S RNA molecule.

The protein resides in the cytoplasm. The enzyme catalyses GTP + H2O = GDP + phosphate + H(+). In terms of biological role, involved in targeting and insertion of nascent membrane proteins into the cytoplasmic membrane. Binds to the hydrophobic signal sequence of the ribosome-nascent chain (RNC) as it emerges from the ribosomes. The SRP-RNC complex is then targeted to the cytoplasmic membrane where it interacts with the SRP receptor FtsY. Interaction with FtsY leads to the transfer of the RNC complex to the Sec translocase for insertion into the membrane, the hydrolysis of GTP by both Ffh and FtsY, and the dissociation of the SRP-FtsY complex into the individual components. This is Signal recognition particle protein from Rickettsia bellii (strain RML369-C).